We begin with the raw amino-acid sequence, 694 residues long: Putative ankyrin repeat protein RBE_0921 (694 aa).

ANK repeat units lie at residues 122 to 151, 155 to 185, 216 to 245, 249 to 275, 279 to 317, 321 to 350, 351 to 382, 384 to 413, 423 to 452, and 456 to 485; these read LGKT…NINV, NGRN…NINS, FNRT…NVEA, TGET…NTEA, LGRT…NPNA, YGFT…KFKK, NRYE…NIND, NGQN…DNGK, QRNT…DINA, and DGET…DINI.

The protein is Putative ankyrin repeat protein RBE_0921 of Rickettsia bellii (strain RML369-C).